A 207-amino-acid chain; its full sequence is Probable flagellin 2 (207 aa).

The propeptide occupies 1 to 14 (MRVGSRKLRRDEKG).

Belongs to the archaeal flagellin family.

It localises to the archaeal flagellum. Its function is as follows. Flagellin is the subunit protein which polymerizes to form the filaments of archaeal flagella. This Archaeoglobus fulgidus (strain ATCC 49558 / DSM 4304 / JCM 9628 / NBRC 100126 / VC-16) protein is Probable flagellin 2 (flaB2).